The primary structure comprises 196 residues: Phosphoheptose isomerase (196 aa).

Residues 33 to 192 form the SIS domain; sequence LIQSLKNGGK…ESECGENGNT (160 aa). A substrate-binding site is contributed by 48–50; the sequence is NGG. Residues His-57 and Glu-61 each coordinate Zn(2+). Substrate-binding positions include Glu-61, 90-91, 116-118, Ser-121, and Gln-168; these read ND and STS. 2 residues coordinate Zn(2+): Gln-168 and His-176.

The protein belongs to the SIS family. GmhA subfamily. Homotetramer. Zn(2+) is required as a cofactor.

Its subcellular location is the cytoplasm. It catalyses the reaction 2 D-sedoheptulose 7-phosphate = D-glycero-alpha-D-manno-heptose 7-phosphate + D-glycero-beta-D-manno-heptose 7-phosphate. It functions in the pathway carbohydrate biosynthesis; D-glycero-D-manno-heptose 7-phosphate biosynthesis; D-glycero-alpha-D-manno-heptose 7-phosphate and D-glycero-beta-D-manno-heptose 7-phosphate from sedoheptulose 7-phosphate: step 1/1. In terms of biological role, catalyzes the isomerization of sedoheptulose 7-phosphate in D-glycero-D-manno-heptose 7-phosphate. In Helicobacter hepaticus (strain ATCC 51449 / 3B1), this protein is Phosphoheptose isomerase.